The sequence spans 274 residues: Eukaryotic translation initiation factor 3 subunit G (274 aa).

Ser146, Ser164, and Ser171 each carry phosphoserine. The tract at residues 149–170 is disordered; that stretch reads ANTSAAATPEPDTDASGKYVPP. One can recognise an RRM domain in the interval 191-270; the sequence is TTLKISQLNT…LILHLEWPKK (80 aa).

The protein belongs to the eIF-3 subunit G family. In terms of assembly, component of the eukaryotic translation initiation factor 3 (eIF-3) complex.

Its subcellular location is the cytoplasm. RNA-binding component of the eukaryotic translation initiation factor 3 (eIF-3) complex, which is involved in protein synthesis of a specialized repertoire of mRNAs and, together with other initiation factors, stimulates binding of mRNA and methionyl-tRNAi to the 40S ribosome. The eIF-3 complex specifically targets and initiates translation of a subset of mRNAs involved in cell proliferation. This subunit can bind 18S rRNA. This is Eukaryotic translation initiation factor 3 subunit G from Meyerozyma guilliermondii (strain ATCC 6260 / CBS 566 / DSM 6381 / JCM 1539 / NBRC 10279 / NRRL Y-324) (Yeast).